We begin with the raw amino-acid sequence, 120 residues long: Large ribosomal subunit protein uL18 (120 aa).

Belongs to the universal ribosomal protein uL18 family. Part of the 50S ribosomal subunit; part of the 5S rRNA/L5/L18/L25 subcomplex. Contacts the 5S and 23S rRNAs.

This is one of the proteins that bind and probably mediate the attachment of the 5S RNA into the large ribosomal subunit, where it forms part of the central protuberance. The sequence is that of Large ribosomal subunit protein uL18 from Ehrlichia ruminantium (strain Gardel).